Here is a 522-residue protein sequence, read N- to C-terminus: Involucrin (522 aa).

The span at 1 to 15 shows a compositional bias: polar residues; it reads MSQQHTLPVTLSPAL. Disordered stretches follow at residues 1–126, 159–329, and 366–496; these read MSQQ…LEEE, QEGQ…LVQQ, and QEGQ…QPVL. The segment covering 76–91 has biased composition (low complexity); the sequence is EQQQQEPQEQELQQQH. The segment covering 92-126 has biased composition (basic and acidic residues); the sequence is WEQHEEHQKAENPEQQLKQEKAQRDQQLNEHLEEE. The span at 169–181 shows a compositional bias: low complexity; the sequence is QEGQLELPEQQEG. 5 stretches are compositionally biased toward basic and acidic residues: residues 182–198, 214–231, 252–264, 274–290, and 305–323; these read QLEH…HLDQ, KHLE…HQKG, QLKH…KQPE, KHLE…EHQE, and QLEE…EGQL. Over residues 375–389 the composition is skewed to low complexity; sequence QQQGQLEVSEQQVGQ. 3 stretches are compositionally biased toward basic and acidic residues: residues 391–401, 409–418, and 431–465; these read KHLEQEGKQLE, QLKHLEKQEA, and KHPE…DLEQ. A compositionally biased stretch (low complexity) spans 466–479; that stretch reads QKGQLEQQQGQLEQ.

This sequence belongs to the involucrin family. In terms of assembly, directly or indirectly cross-linked to cornifelin (CNFN). Post-translationally, substrate of transglutaminase. Specific glutamines or lysines are cross-linked to keratins, desmoplakin and to inter involucrin molecules. In terms of tissue distribution, keratinocytes of epidermis and other stratified squamous epithelia.

It localises to the cytoplasm. Functionally, part of the insoluble cornified cell envelope (CE) of stratified squamous epithelia. The polypeptide is Involucrin (IVL) (Hylobates lar (Lar gibbon)).